Here is a 196-residue protein sequence, read N- to C-terminus: Acyl-homoserine-lactone synthase (196 aa).

Belongs to the autoinducer synthase family.

It catalyses the reaction a fatty acyl-[ACP] + S-adenosyl-L-methionine = an N-acyl-L-homoserine lactone + S-methyl-5'-thioadenosine + holo-[ACP] + H(+). In terms of biological role, required for the synthesis of a yet unknown N-aceyl-homoserine lactone (N-aceyl-HSL), an autoinducer molecule which binds to PhzR and thus regulates phenazine production. The protein is Acyl-homoserine-lactone synthase (phzI) of Pseudomonas chlororaphis (Pseudomonas aureofaciens).